The chain runs to 422 residues: MNSGHSFSQTPSASFHGAGGGWGRPRSFPRAPTVHGGAGGARISLSFTTRSCPPPGGSWGSGRSSPLLGGNGKATMQNLNDRLASYLEKVRALEEANMKLESRILKWHQQRDPGSKKDYSQYEENITHLQEQIVDGKMTNAQIILLIDNARMAVDDFNLKYENEHSFKKDLEIEVEGLRRTLDNLTIVTTDLEQEVEGMRKELILMKKHHEQEMEKHHVPSDFNVNVKVDTGPREDLIKVLEDMRQEYELIIKKKHRDLDTWYKEQSAAMSQEAASPATVQSRQGDIHELKRTFQALEIDLQTQYSTKSALENMLSETQSRYSCKLQDMQEIISHYEEELTQLRHELERQNNEYQVLLGIKTHLEKEITTYRRLLEGESEGTREESKSSMKVSATPKIKAITQETINGRLVLCQVNEIQKHA.

Polar residues predominate over residues 1–13 (MNSGHSFSQTPSA). The interval 1 to 71 (MNSGHSFSQT…GRSSPLLGGN (71 aa)) is head. A disordered region spans residues 1-73 (MNSGHSFSQT…SSPLLGGNGK (73 aa)). The interval 72-107 (GKATMQNLNDRLASYLEKVRALEEANMKLESRILKW) is coil 1A. The IF rod domain occupies 72 to 382 (GKATMQNLND…RLLEGESEGT (311 aa)). The segment at 108–125 (HQQRDPGSKKDYSQYEEN) is linker 1. Positions 126-217 (ITHLQEQIVD…KHHEQEMEKH (92 aa)) are coil 1B. The segment at 218-240 (HVPSDFNVNVKVDTGPREDLIKV) is linker 12. A coil 2 region spans residues 241–378 (LEDMRQEYEL…TTYRRLLEGE (138 aa)). Positions 379–422 (SEGTREESKSSMKVSATPKIKAITQETINGRLVLCQVNEIQKHA) are rod-like helical tail.

Belongs to the intermediate filament family. Heterotetramer of two type I and two type II keratins.

This Homo sapiens (Human) protein is Keratin, type I cytoskeletal 23 (KRT23).